The following is a 180-amino-acid chain: Shikimate kinase (180 aa).

15–20 (GAGKTT) serves as a coordination point for ATP. A Mg(2+)-binding site is contributed by T19. D37, R61, and G83 together coordinate substrate. R121 is a binding site for ATP. Position 140 (R140) interacts with substrate.

This sequence belongs to the shikimate kinase family. In terms of assembly, monomer. Mg(2+) is required as a cofactor.

It is found in the cytoplasm. The enzyme catalyses shikimate + ATP = 3-phosphoshikimate + ADP + H(+). It functions in the pathway metabolic intermediate biosynthesis; chorismate biosynthesis; chorismate from D-erythrose 4-phosphate and phosphoenolpyruvate: step 5/7. Catalyzes the specific phosphorylation of the 3-hydroxyl group of shikimic acid using ATP as a cosubstrate. In Psychrobacter sp. (strain PRwf-1), this protein is Shikimate kinase.